A 404-amino-acid polypeptide reads, in one-letter code: Sorting nexin-5 (404 aa).

Ala-2 carries the N-acetylalanine modification. In terms of domain architecture, PX spans Leu-25–Leu-172. Residues Ser-40–Lys-46, Phe-99–Lys-105, and Glu-113–Met-116 contribute to the a 1,2-diacyl-sn-glycero-3-phospho-(1D-myo-inositol-4,5-bisphosphate) site. An interaction with DOCK1 region spans residues Asp-169–Val-261. The membrane-binding amphipathic helix stretch occupies residues Phe-183–Ser-200. Ser-193 is subject to Phosphoserine. In terms of domain architecture, BAR spans Val-202 to Asn-404. At Lys-275 the chain carries N6-acetyllysine.

Belongs to the sorting nexin family. In terms of assembly, forms heterodimers with BAR domain-containing sorting nexins SNX1 and SNX2; does not homodimerize. The heterodimers are proposed to self-assemble into helical arrays on the membrane to stabilize and expand local membrane curvature underlying endosomal tubule formation. Thought to be a component of the originally described retromer complex (also called SNX-BAR retromer) which is a pentamer containing the heterotrimeric retromer cargo-selective complex (CSC), also described as vacuolar protein sorting subcomplex (VPS), and a heterodimeric membrane-deforming subcomplex formed between SNX1 or SNX2 and SNX5 or SNX6 (also called SNX-BAR subcomplex); the respective CSC and SNX-BAR subcomplexes associate with low affinity. Interacts with SNX1, SNX2, VPS26A, VPS29, VPS35, DCTN1, DOCK1, MIB1, PIP5K1C. Interacts with HGS; increased by PIP5K1C kinase activity and by PtdIns(3P) and/or PtdIns(3,4)P2.

The protein localises to the endosome. It is found in the early endosome. The protein resides in the early endosome membrane. It localises to the cell membrane. Its subcellular location is the cytoplasmic vesicle membrane. The protein localises to the cytoplasm. It is found in the cell projection. The protein resides in the phagocytic cup. It localises to the ruffle. Involved in several stages of intracellular trafficking. Interacts with membranes containing phosphatidylinositol lipids. Acts in part as component of the retromer membrane-deforming SNX-BAR subcomplex. The SNX-BAR retromer mediates retrograde transport of cargo proteins from endosomes to the trans-Golgi network (TGN) and is involved in endosome-to-plasma membrane transport for cargo protein recycling. The SNX-BAR subcomplex functions to deform the donor membrane into a tubular profile called endosome-to-TGN transport carrier (ETC). Does not have in vitro vesicle-to-membrane remodeling activity. Involved in retrograde transport of lysosomal enzyme receptor IGF2R. May function as link between endosomal transport vesicles and dynactin. Plays a role in the internalization of EGFR after EGF stimulation. Involved in EGFR endosomal sorting and degradation; the function involves PIP5K1C and is retromer-independent. Together with PIP5K1C facilitates HGS interaction with ubiquitinated EGFR, which initiates EGFR sorting to intraluminal vesicles (ILVs) of the multivesicular body for subsequent lysosomal degradation. Involved in E-cadherin sorting and degradation; inhibits PIP5K1C-mediated E-cadherin degradation. Plays a role in macropinocytosis. This is Sorting nexin-5 (SNX5) from Bos taurus (Bovine).